The chain runs to 145 residues: D-aminoacyl-tRNA deacylase (145 aa).

The Gly-cisPro motif, important for rejection of L-amino acids motif lies at 137 to 138 (GP).

This sequence belongs to the DTD family. In terms of assembly, homodimer.

The protein localises to the cytoplasm. It carries out the reaction glycyl-tRNA(Ala) + H2O = tRNA(Ala) + glycine + H(+). The catalysed reaction is a D-aminoacyl-tRNA + H2O = a tRNA + a D-alpha-amino acid + H(+). In terms of biological role, an aminoacyl-tRNA editing enzyme that deacylates mischarged D-aminoacyl-tRNAs. Also deacylates mischarged glycyl-tRNA(Ala), protecting cells against glycine mischarging by AlaRS. Acts via tRNA-based rather than protein-based catalysis; rejects L-amino acids rather than detecting D-amino acids in the active site. By recycling D-aminoacyl-tRNA to D-amino acids and free tRNA molecules, this enzyme counteracts the toxicity associated with the formation of D-aminoacyl-tRNA entities in vivo and helps enforce protein L-homochirality. The chain is D-aminoacyl-tRNA deacylase from Salmonella agona (strain SL483).